A 559-amino-acid polypeptide reads, in one-letter code: Alpha-(1,6)-fucosyltransferase (559 aa).

Topologically, residues Met-1–Cys-4 are cytoplasmic. Residues Ile-5 to Leu-24 traverse the membrane as a helical; Signal-anchor for type II membrane protein segment. Over Ser-25–Asp-559 the chain is Lumenal. The N-linked (GlcNAc...) asparagine glycan is linked to Asn-27. The segment covering Gln-63 to Glu-74 has biased composition (basic and acidic residues). The segment at Gln-63–Lys-90 is disordered. Pro residues predominate over residues Pro-80 to Lys-90. Asn-134 carries an N-linked (GlcNAc...) asparagine glycan. 3 disulfides stabilise this stretch: Cys-188/Cys-251, Cys-196/Cys-214, and Cys-202/Cys-206. A GT23 domain is found at Glu-190–Leu-480. The segment at Arg-351 to Arg-352 is important for donor substrate binding. A disulfide bond links Cys-452 and Cys-459. The 62-residue stretch at Gln-489–Arg-550 folds into the SH3 domain.

The protein belongs to the glycosyltransferase 23 family. Mn(2+) serves as cofactor. The cofactor is Mg(2+).

The protein resides in the golgi apparatus. The protein localises to the golgi stack membrane. The enzyme catalyses N(4)-{beta-D-GlcNAc-(1-&gt;2)-alpha-D-Man-(1-&gt;3)-[beta-D-GlcNAc-(1-&gt;2)-alpha-D-Man-(1-&gt;6)]-beta-D-Man-(1-&gt;4)-beta-D-GlcNAc-(1-&gt;4)-beta-D-GlcNAc}-L-asparaginyl-[protein] + GDP-beta-L-fucose = an N(4)-{beta-D-GlcNAc-(1-&gt;2)-alpha-D-Man-(1-&gt;3)-[beta-D-GlcNAc-(1-&gt;2)-alpha-D-Man-(1-&gt;6)]-beta-D-Man-(1-&gt;4)-beta-D-GlcNAc-(1-&gt;4)-[alpha-L-Fuc-(1-&gt;6)]-beta-D-GlcNAc}-L-asparaginyl-[protein] + GDP + H(+). It participates in protein modification; protein glycosylation. Its activity is regulated as follows. Inhibited by Fe(3+), Ni(2+) and Cu(2+). Catalyzes the addition of fucose in alpha 1-6 linkage to the first GlcNAc residue, next to the peptide chains in N-glycans. The addition is prevented if the GlcNAc residue is already fucosylated. Involved in susceptibility to the nematotoxic C.cinerea galectin Cgl2, likely by contributing to the synthesis of core alpha-1,6-fucosylated N-glycans to which Cgl2 binds. This is Alpha-(1,6)-fucosyltransferase from Caenorhabditis elegans.